Reading from the N-terminus, the 93-residue chain is Large ribosomal subunit protein mL41 (93 aa).

The transit peptide at 1-13 directs the protein to the mitochondrion; the sequence is MHQSLLCFGARRL.

Belongs to the mitochondrion-specific ribosomal protein mL41 family. As to quaternary structure, component of the mitochondrial large ribosomal subunit (mt-LSU). Mature yeast 74S mitochondrial ribosomes consist of a small (37S) and a large (54S) subunit. The 37S small subunit contains a 15S ribosomal RNA (15S mt-rRNA) and at least 32 different proteins. The 54S large subunit contains a 21S rRNA (21S mt-rRNA) and at least 45 different proteins.

The protein resides in the mitochondrion. Its function is as follows. Component of the mitochondrial ribosome (mitoribosome), a dedicated translation machinery responsible for the synthesis of mitochondrial genome-encoded proteins, including at least some of the essential transmembrane subunits of the mitochondrial respiratory chain. The mitoribosomes are attached to the mitochondrial inner membrane and translation products are cotranslationally integrated into the membrane. The chain is Large ribosomal subunit protein mL41 (mrpl27) from Schizosaccharomyces pombe (strain 972 / ATCC 24843) (Fission yeast).